A 215-amino-acid chain; its full sequence is Probable cutinase 3 (215 aa).

The signal sequence occupies residues 1-17 (MHFRALLVSALATLAMA). Disulfide bonds link Cys-39-Cys-118 and Cys-65-Cys-79. The active-site Nucleophile is Ser-129. Cys-180 and Cys-187 form a disulfide bridge. Asp-184 is a catalytic residue. The active-site Proton donor/acceptor is His-197.

The protein belongs to the cutinase family.

It localises to the secreted. The catalysed reaction is cutin + H2O = cutin monomers.. Its function is as follows. Catalyzes the hydrolysis of complex carboxylic polyesters found in the cell wall of plants. Degrades cutin, a macromolecule that forms the structure of the plant cuticle. The chain is Probable cutinase 3 from Aspergillus clavatus (strain ATCC 1007 / CBS 513.65 / DSM 816 / NCTC 3887 / NRRL 1 / QM 1276 / 107).